The following is a 128-amino-acid chain: MSRKESRSQAFQALFQLEMENTDLSIDEAINFIKDDYPDLEFDFIYWLVSGVKDHEPVLDEKIQNNLKDWKISRLLKTDRIILRMAAFELANSDTPPKVIINEAVELAKQYSDDDHYRFINGVLSNLN.

It belongs to the NusB family.

Its function is as follows. Involved in transcription antitermination. Required for transcription of ribosomal RNA (rRNA) genes. Binds specifically to the boxA antiterminator sequence of the ribosomal RNA (rrn) operons. The polypeptide is Transcription antitermination protein NusB (Staphylococcus carnosus (strain TM300)).